A 563-amino-acid chain; its full sequence is Kdo(2)-lipid A phosphoethanolamine 7''-transferase (563 aa).

The Cytoplasmic segment spans residues 1–9 (MRYIKSITQ). Residues 10–30 (QKLSFLLAIYIGLFMNGAVFY) form a helical membrane-spanning segment. The Periplasmic portion of the chain corresponds to 31-48 (RRFGSYAHDFTVWKGISA). Residues 49–69 (VVELAATVLVTFFLLRLLSLF) traverse the membrane as a helical segment. At 70-79 (GRRSWRILAS) the chain is on the cytoplasmic side. A helical transmembrane segment spans residues 80–100 (LVVLFSAGASYYMTFLNVVIG). The Periplasmic segment spans residues 101–117 (YGIIASVMTTDIDLSKE). Residues 118–138 (VVGLNFILWLIAVSALPLILI) form a helical membrane-spanning segment. Residues 139–159 (WNNRCRYTLLRQLRTPGQRIR) are Cytoplasmic-facing. Residues 160 to 180 (SLAVVVLAGIMVWAPIRLLDI) form a helical membrane-spanning segment. Residues 181–563 (QQKKVERATG…IPQAKEAAAN (383 aa)) lie on the Periplasmic side of the membrane.

This sequence belongs to the phosphoethanolamine transferase family. EptB subfamily. Ca(2+) serves as cofactor.

It is found in the cell inner membrane. The catalysed reaction is alpha-Kdo-(2-&gt;4)-alpha-Kdo-(2-&gt;6)-lipid A (E. coli) + a 1,2-diacyl-sn-glycero-3-phosphoethanolamine = 7-O-[2-aminoethoxy(hydroxy)phosphoryl]-alpha-Kdo-(2-&gt;4)-alpha-Kdo-(2-&gt;6)-lipid A + a 1,2-diacyl-sn-glycerol. It carries out the reaction alpha-Kdo-(2-&gt;4)-alpha-Kdo-(2-&gt;6)-lipid IVA (E. coli) + a 1,2-diacyl-sn-glycero-3-phosphoethanolamine = 7-O-[2-aminoethoxy(hydroxy)phosphoryl]-alpha-Kdo-(2-&gt;4)-alpha-Kdo-(2-&gt;6)-lipid IVA (E. coli) + a 1,2-diacyl-sn-glycerol. With respect to regulation, inhibited by calcium concentrations higher than 1 mM. Functionally, catalyzes the addition of a phosphoethanolamine (pEtN) moiety to the outer 3-deoxy-D-manno-octulosonic acid (Kdo) residue of a Kdo(2)-lipid A. Phosphatidylethanolamines with one unsaturated acyl group function as pEtN donors and the reaction releases diacylglycerol. In Escherichia coli (strain K12), this protein is Kdo(2)-lipid A phosphoethanolamine 7''-transferase (eptB).